The chain runs to 214 residues: MSYPQWPGQLRDGLAAMNLSLSDSQQQQLLAFLALLNKWNKAYNLTAVRDERVMVSRQLLDSLSILPWVTTDHLLDVGAGGGLPGIPLAIVVPEKRFTLLDSNGKKTRFLNQCVLELGLDNVEVIHGRAEDCQPDQPFTQISSRAFTALENLVTWCGGLLANDGEFLAMKGQYPDDEVAALPAGWQVESSHSLTVPGADGERHLLIVARAERHR.

S-adenosyl-L-methionine-binding positions include G78, L83, 129–130 (AE), and R144.

The protein belongs to the methyltransferase superfamily. RNA methyltransferase RsmG family.

It localises to the cytoplasm. The enzyme catalyses guanosine(527) in 16S rRNA + S-adenosyl-L-methionine = N(7)-methylguanosine(527) in 16S rRNA + S-adenosyl-L-homocysteine. In terms of biological role, specifically methylates the N7 position of guanine in position 527 of 16S rRNA. The chain is Ribosomal RNA small subunit methyltransferase G from Marinobacter nauticus (strain ATCC 700491 / DSM 11845 / VT8) (Marinobacter aquaeolei).